A 556-amino-acid chain; its full sequence is MQYSIQKFLNEGAYKLQHIGINNPKLEARILLQHAINKPYEYLLANPEKQLNQLEIEAVEKVLERRLKHEPIAYILGTKEFYSREFIVNKHVLIPRNDTEILIDVVLQYHSQHSLCHSSNGGNPDKKQLDSVVKPRNNIKSSNILELGTGSGCISISLLLELPNSQITATDISIDAIEVAKSNAIKHDVTDRLQIIHSNWFENIGKQKFDLIVSNPPYISINEKPEMAIETINYEPSIALFAEEDGLLSYKIIAENAKKFLKQNGKIILEIGYKQADQVSQIFLDHGYVIDNIHQDLQSHNRVIEISLIQLNRSYARRIGKSLSGIQQNLLDNELPKYLFSKEKLIGKNYNSCKIKSNYTKFNLEKSKESVSRGAERIKIREHLRTYKEDVANFSSSTSIFLEIGFGMGEHFINQAKMNPDKLFIGVEVYLNGVANVLKLAEEQNITNFLLFPNNLDFILHDLPNNSLDRIYILFPDPWIKNRQKKKRILNKERLTILQTKLKNKGSLIFTSDIENYFEEVVELIKQNGNFQITNEDNYSKPHDNYIITKIPPKSY.

The interval 1–310 (MQYSIQKFLN…NRVIEISLIQ (310 aa)) is RF MTase. S-adenosyl-L-methionine-binding positions include 148-152 (GTGSG), Asp171, Trp200, and Asn215. Residue 215–218 (NPPY) coordinates substrate. The tract at residues 313-556 (RSYARRIGKS…IITKIPPKSY (244 aa)) is tRNA MTase. Residues 348-399 (KNYNSCKIKSNYTKFNLEKSKESVSRGAERIKIREHLRTYKEDVANFSSSTS) form an insert region. Residues Glu403, Glu428, Asn455, and Asp477 each contribute to the S-adenosyl-L-methionine site. Residue Asp477 is part of the active site. Positions 481 and 513 each coordinate substrate.

In the C-terminal section; belongs to the class I-like SAM-binding methyltransferase superfamily. TrmB family. This sequence in the N-terminal section; belongs to the protein N5-glutamine methyltransferase family. PrmC subfamily.

The enzyme catalyses L-glutaminyl-[peptide chain release factor] + S-adenosyl-L-methionine = N(5)-methyl-L-glutaminyl-[peptide chain release factor] + S-adenosyl-L-homocysteine + H(+). It carries out the reaction guanosine(46) in tRNA + S-adenosyl-L-methionine = N(7)-methylguanosine(46) in tRNA + S-adenosyl-L-homocysteine. In terms of biological role, methylates the class 1 translation termination release factors RF1/PrfA and RF2/PrfB on the glutamine residue of the universally conserved GGQ motif. Catalyzes the formation of N(7)-methylguanine at position 46 (m7G46) in tRNA. The sequence is that of Bifunctional methyltransferase (prmC/trmB) from Rickettsia bellii (strain RML369-C).